A 389-amino-acid polypeptide reads, in one-letter code: cAMP-dependent protein kinase regulatory subunit (389 aa).

2 disordered regions span residues 1–57 (MSEN…KFAG) and 87–110 (SVSA…PPYH). The tract at residues 1–128 (MSENTFPGRL…RLKKSISGNF (128 aa)) is dimerization and phosphorylation. The segment covering 21-31 (AANTEKPSTSH) has biased composition (polar residues). A compositionally biased stretch (basic and acidic residues) spans 34 to 43 (RVTERDEDKV). Ser-87 is subject to Phosphoserine. Residues 87 to 105 (SVSAESLNPNPTASSNESW) are compositionally biased toward polar residues. Residues 129 to 258 (LFNH…FLEE), Glu-207, Arg-216, 261 to 377 (LLST…GVEE), Glu-327, and Arg-336 each bind 3',5'-cyclic AMP.

Belongs to the cAMP-dependent kinase regulatory chain family. Tetramer, composed of 2 regulatory (R) and 2 catalytic (C) subunits. In the presence of cAMP it dissociates into 2 active monomeric C subunits and an R dimer.

The sequence is that of cAMP-dependent protein kinase regulatory subunit (pkar) from Blumeria graminis (Powdery mildew).